The following is a 393-amino-acid chain: Acetylornithine aminotransferase (393 aa).

Pyridoxal 5'-phosphate contacts are provided by residues 105–106 and Phe-138; that span reads GA. Arg-141 is a N(2)-acetyl-L-ornithine binding site. 224 to 227 contributes to the pyridoxal 5'-phosphate binding site; the sequence is DEVQ. Lys-253 is subject to N6-(pyridoxal phosphate)lysine. Ser-281 serves as a coordination point for N(2)-acetyl-L-ornithine. Residue Thr-282 participates in pyridoxal 5'-phosphate binding.

It belongs to the class-III pyridoxal-phosphate-dependent aminotransferase family. ArgD subfamily. In terms of assembly, homodimer. It depends on pyridoxal 5'-phosphate as a cofactor.

Its subcellular location is the cytoplasm. It carries out the reaction N(2)-acetyl-L-ornithine + 2-oxoglutarate = N-acetyl-L-glutamate 5-semialdehyde + L-glutamate. The protein operates within amino-acid biosynthesis; L-arginine biosynthesis; N(2)-acetyl-L-ornithine from L-glutamate: step 4/4. The protein is Acetylornithine aminotransferase of Haemophilus ducreyi (strain 35000HP / ATCC 700724).